Reading from the N-terminus, the 256-residue chain is tRNA pseudouridine synthase A (256 aa).

Catalysis depends on aspartate 52, which acts as the Nucleophile. Tyrosine 111 contributes to the substrate binding site.

The protein belongs to the tRNA pseudouridine synthase TruA family. In terms of assembly, homodimer.

The catalysed reaction is uridine(38/39/40) in tRNA = pseudouridine(38/39/40) in tRNA. Formation of pseudouridine at positions 38, 39 and 40 in the anticodon stem and loop of transfer RNAs. This is tRNA pseudouridine synthase A from Paramagnetospirillum magneticum (strain ATCC 700264 / AMB-1) (Magnetospirillum magneticum).